The primary structure comprises 115 residues: Fluoride-specific ion channel FluC 4 (115 aa).

2 consecutive transmembrane segments (helical) span residues 19–39 (WGTF…AGLG) and 42–62 (LGGI…LLGG). The Na(+) site is built by glycine 61 and threonine 64. Residues 89 to 109 (IVASALLCVLAVAAGYGGIMW) traverse the membrane as a helical segment.

It belongs to the fluoride channel Fluc/FEX (TC 1.A.43) family.

The protein resides in the cell inner membrane. The catalysed reaction is fluoride(in) = fluoride(out). Na(+) is not transported, but it plays an essential structural role and its presence is essential for fluoride channel function. Fluoride-specific ion channel. Important for reducing fluoride concentration in the cell, thus reducing its toxicity. The sequence is that of Fluoride-specific ion channel FluC 4 from Brucella melitensis biotype 1 (strain ATCC 23456 / CCUG 17765 / NCTC 10094 / 16M).